The chain runs to 242 residues: tRNA (guanine-N(1)-)-methyltransferase (242 aa).

S-adenosyl-L-methionine contacts are provided by residues Gly112 and 131-136; that span reads LGDFIL.

The protein belongs to the RNA methyltransferase TrmD family. In terms of assembly, homodimer.

Its subcellular location is the cytoplasm. It carries out the reaction guanosine(37) in tRNA + S-adenosyl-L-methionine = N(1)-methylguanosine(37) in tRNA + S-adenosyl-L-homocysteine + H(+). Specifically methylates guanosine-37 in various tRNAs. The protein is tRNA (guanine-N(1)-)-methyltransferase of Crocosphaera subtropica (strain ATCC 51142 / BH68) (Cyanothece sp. (strain ATCC 51142)).